Here is a 197-residue protein sequence, read N- to C-terminus: Rac-like GTP-binding protein ARAC6 (197 aa).

13-20 (GDGAVGKT) provides a ligand contact to GTP. Residues 35–43 (YVPTVFDNF) carry the Effector region motif. GTP is bound by residues 60-64 (DTAGQ) and 118-121 (TKLD). Position 160 (Ser-160) interacts with GDP. Position 194 is a cysteine methyl ester (Cys-194). Cys-194 carries the S-geranylgeranyl cysteine lipid modification. Residues 195–197 (SIL) constitute a propeptide, removed in mature form.

It belongs to the small GTPase superfamily. Rho family. Interacts with SPK1. In terms of tissue distribution, ubiquitous. Preferentially expressed in mature pollen and pollen tubes.

Its subcellular location is the cytoplasm. The protein localises to the membrane. May be involved in cell polarity control during the actin-dependent tip growth of pollen tubes. Functionally, inactive GDP-bound Rho GTPases reside in the cytosol, are found in a complex with Rho GDP-dissociation inhibitors (Rho GDIs), and are released from the GDI protein in order to translocate to membranes upon activation. In Arabidopsis thaliana (Mouse-ear cress), this protein is Rac-like GTP-binding protein ARAC6 (ARAC6).